The chain runs to 288 residues: Proteasome subunit beta (288 aa).

Positions 1 to 60 (MESNADWGSRGGLPQAFLTPGISSFSEFLKGFAPEYLPSGRPLPGGLGSASAAGDIAPHG) are cleaved as a propeptide — removed in mature form; by autocatalysis. The active-site Nucleophile is Thr61.

This sequence belongs to the peptidase T1B family. As to quaternary structure, the 20S proteasome core is composed of 14 alpha and 14 beta subunits that assemble into four stacked heptameric rings, resulting in a barrel-shaped structure. The two inner rings, each composed of seven catalytic beta subunits, are sandwiched by two outer rings, each composed of seven alpha subunits. The catalytic chamber with the active sites is on the inside of the barrel. Has a gated structure, the ends of the cylinder being occluded by the N-termini of the alpha-subunits. Is capped by the proteasome-associated ATPase, ARC.

The protein localises to the cytoplasm. It carries out the reaction Cleavage of peptide bonds with very broad specificity.. Its pathway is protein degradation; proteasomal Pup-dependent pathway. Its activity is regulated as follows. The formation of the proteasomal ATPase ARC-20S proteasome complex, likely via the docking of the C-termini of ARC into the intersubunit pockets in the alpha-rings, may trigger opening of the gate for substrate entry. Interconversion between the open-gate and close-gate conformations leads to a dynamic regulation of the 20S proteasome proteolysis activity. Its function is as follows. Component of the proteasome core, a large protease complex with broad specificity involved in protein degradation. In Catenulispora acidiphila (strain DSM 44928 / JCM 14897 / NBRC 102108 / NRRL B-24433 / ID139908), this protein is Proteasome subunit beta.